The primary structure comprises 685 residues: Amino acid transporter heavy chain SLC3A1 (685 aa).

Over residues 1–11 (MAEDKSKRDSI) the composition is skewed to basic and acidic residues. The segment at 1–56 (MAEDKSKRDSIEMSMKGCQTNNGFVHNEDILEQTPDPGSSTDNLKHSTRGILGSQE) is disordered. The Cytoplasmic segment spans residues 1 to 87 (MAEDKSKRDS…GQARYRIPRE (87 aa)). Phosphoserine is present on S10. The helical; Signal-anchor for type II membrane protein transmembrane segment at 88–108 (ILFWLTVASVLVLIAATIAII) threads the bilayer. Residues 109 to 685 (ALSPKCLDWW…SVLNILYTSC (577 aa)) are Extracellular-facing. N214 is a binding site for Ca(2+). Residues N214 and N261 are each glycosylated (N-linked (GlcNAc...) asparagine). Residues C242 and C273 are joined by a disulfide bond. Ca(2+) contacts are provided by D284, F318, L319, and E321. N-linked (GlcNAc...) asparagine glycans are attached at residues N332, N495, N513, and N575. 2 cysteine pairs are disulfide-bonded: C571/C666 and C673/C685.

Disulfide-linked heterodimer composed of the catalytic light subunit SLC7A9 and the heavy subunit SLC3A1. The heterodimer is the minimal functional unit. Assembles in non-covalently linked heterotetramers (dimers of heterodimers) and higher order oligomers; the oligomerization is mediated by SLC3A1 likely to prevent degradation in the endoplasmic reticulum and facilitate heteromer trafficking to the plasma membrane. Disulfide-linked heterodimer composed of the catalytic light subunit SLC7A13 and the heavy subunit SLC3A1. Expressed in the brush border membrane in the kidney (at protein level). Predominantly expressed in the kidney, small intestine and pancreas. Weakly expressed in liver.

The protein resides in the cell membrane. It is found in the apical cell membrane. In terms of biological role, acts as a chaperone that facilitates biogenesis and trafficking of functional transporter heteromers to the plasma membrane. Associates with SLC7A9 to form a functional transporter complex that mediates the electrogenic exchange between cationic amino acids and neutral amino acids, with a stoichiometry of 1:1. SLC7A9-SLC3A1 transporter has system b(0,+)-like activity with high affinity for extracellular cationic amino acids and L-cystine and lower affinity for intracellular neutral amino acids. Substrate exchange is driven by high concentration of intracellular neutral amino acids and the intracellular reduction of L-cystine to L-cysteine. SLC7A9-SLC3A1 acts as a major transporter for reabsorption of L-cystine and dibasic amino acids across the brush border membrane in early proximal tubules. Associates with SLC7A13 to form a functional complex that transports anionic and neutral amino acids via exchange or facilitated diffusion. SLC7A13-SLC3A1 may act as a major transporter for L-cystine in late proximal tubules, ensuring its reabsorption from the luminal fluid in exchange for cytosolic L-glutamate or L-aspartate. This Homo sapiens (Human) protein is Amino acid transporter heavy chain SLC3A1.